The primary structure comprises 231 residues: Cytidylate kinase (231 aa).

Gly-11 to Thr-19 contacts ATP.

It belongs to the cytidylate kinase family. Type 1 subfamily.

Its subcellular location is the cytoplasm. The enzyme catalyses CMP + ATP = CDP + ADP. It catalyses the reaction dCMP + ATP = dCDP + ADP. This Porphyromonas gingivalis (strain ATCC BAA-308 / W83) protein is Cytidylate kinase.